A 204-amino-acid polypeptide reads, in one-letter code: Guanylate kinase (204 aa).

One can recognise a Guanylate kinase-like domain in the interval 5 to 184; sequence GLLLVLSGPS…AVNHIKAIVD (180 aa). 12–19 contributes to the ATP binding site; sequence GPSGVGKG.

Belongs to the guanylate kinase family.

The protein localises to the cytoplasm. The catalysed reaction is GMP + ATP = GDP + ADP. Its function is as follows. Essential for recycling GMP and indirectly, cGMP. In Lactobacillus delbrueckii subsp. bulgaricus (strain ATCC 11842 / DSM 20081 / BCRC 10696 / JCM 1002 / NBRC 13953 / NCIMB 11778 / NCTC 12712 / WDCM 00102 / Lb 14), this protein is Guanylate kinase.